The sequence spans 809 residues: Phenylalanine--tRNA ligase beta subunit (809 aa).

The tRNA-binding domain maps to 39 to 152; that stretch reads KDKWPNVYVG…ADAPVGMLAS (114 aa). Positions 404–492 constitute a B5 domain; it reads KDRNSVVLSL…RIAGYDTIPC (89 aa). Mg(2+) contacts are provided by Asp-470, Asp-476, Glu-479, and Glu-480. An FDX-ACB domain is found at 717–808; that stretch reads NRFPSVERDL…LNTETGAVLR (92 aa).

This sequence belongs to the phenylalanyl-tRNA synthetase beta subunit family. Type 1 subfamily. Tetramer of two alpha and two beta subunits. It depends on Mg(2+) as a cofactor.

Its subcellular location is the cytoplasm. The catalysed reaction is tRNA(Phe) + L-phenylalanine + ATP = L-phenylalanyl-tRNA(Phe) + AMP + diphosphate + H(+). This Dehalococcoides mccartyi (strain ATCC BAA-2266 / KCTC 15142 / 195) (Dehalococcoides ethenogenes (strain 195)) protein is Phenylalanine--tRNA ligase beta subunit.